Consider the following 321-residue polypeptide: AA9 family lytic polysaccharide monooxygenase C (321 aa).

An N-terminal signal peptide occupies residues 1–18; it reads MKLQLIIPFSFLISYVSA. Residue His19 participates in Cu(2+) binding. N-linked (GlcNAc...) asparagine glycosylation is present at Asn33. 2 cysteine pairs are disulfide-bonded: Cys57-Cys191 and Cys161-Cys242. Residue His103 coordinates Cu(2+). O2 contacts are provided by His177 and Gln186. Position 188 (Tyr188) interacts with Cu(2+). An N-linked (GlcNAc...) asparagine glycan is attached at Asn195. In terms of domain architecture, CBM1 spans 283 to 319; sequence GTAAIYAQCGGQGWTGATVCASGSKCVVSSAFYSQCL.

This sequence belongs to the polysaccharide monooxygenase AA9 family. It depends on Cu(2+) as a cofactor.

The protein resides in the secreted. The enzyme catalyses [(1-&gt;4)-beta-D-glucosyl]n+m + reduced acceptor + O2 = 4-dehydro-beta-D-glucosyl-[(1-&gt;4)-beta-D-glucosyl]n-1 + [(1-&gt;4)-beta-D-glucosyl]m + acceptor + H2O.. In terms of biological role, major lytic polysaccharide monooxygenase (LPMO) that depolymerizes crystalline and amorphous polysaccharides via the oxidation of scissile alpha- or beta-(1-4)-glycosidic bonds, yielding C1 and C4 oxidation products. Catalysis by LPMOs requires the reduction of the active-site copper from Cu(II) to Cu(I) by a reducing agent and H(2)O(2) or O(2) as a cosubstrate. This chain is AA9 family lytic polysaccharide monooxygenase C, found in Botryotinia fuckeliana (strain B05.10) (Noble rot fungus).